A 270-amino-acid polypeptide reads, in one-letter code: Phosphatidylglycerol--prolipoprotein diacylglyceryl transferase (270 aa).

Transmembrane regions (helical) follow at residues 10–30 (VAVA…LVGI), 56–76 (LIFW…VLFY), 92–112 (WKGG…AWWF), 120–140 (FFQL…AGRI), 175–195 (SQLY…NLYA), 202–222 (MAVS…VEFV), and 237–257 (VTMG…LIWL). Arg-139 contributes to the a 1,2-diacyl-sn-glycero-3-phospho-(1'-sn-glycerol) binding site.

Belongs to the Lgt family.

It is found in the cell inner membrane. The catalysed reaction is L-cysteinyl-[prolipoprotein] + a 1,2-diacyl-sn-glycero-3-phospho-(1'-sn-glycerol) = an S-1,2-diacyl-sn-glyceryl-L-cysteinyl-[prolipoprotein] + sn-glycerol 1-phosphate + H(+). Its pathway is protein modification; lipoprotein biosynthesis (diacylglyceryl transfer). Its function is as follows. Catalyzes the transfer of the diacylglyceryl group from phosphatidylglycerol to the sulfhydryl group of the N-terminal cysteine of a prolipoprotein, the first step in the formation of mature lipoproteins. This is Phosphatidylglycerol--prolipoprotein diacylglyceryl transferase from Pseudomonas syringae pv. syringae (strain B728a).